The sequence spans 96 residues: Transmembrane protein PMIS2 (96 aa).

Transmembrane regions (helical) follow at residues 31–51 (VMLALLAMILFLPFGILAIYF) and 76–96 (WFNMLAIVAFVGIIYILVLVL).

The protein belongs to the CD225/Dispanin family. Specifically expressed in testis.

Its subcellular location is the membrane. May play a role in spermatozoa mobility. The protein is Transmembrane protein PMIS2 of Mus musculus (Mouse).